We begin with the raw amino-acid sequence, 365 residues long: tRNA 2-selenouridine synthase (365 aa).

The region spanning 15–138 is the Rhodanese domain; it reads FVNDHPIMDA…MRQFLIETID (124 aa). The active-site S-selanylcysteine intermediate is C98.

This sequence belongs to the SelU family. Monomer.

The enzyme catalyses 5-methylaminomethyl-2-thiouridine(34) in tRNA + selenophosphate + (2E)-geranyl diphosphate + H2O + H(+) = 5-methylaminomethyl-2-selenouridine(34) in tRNA + (2E)-thiogeraniol + phosphate + diphosphate. It catalyses the reaction 5-methylaminomethyl-2-thiouridine(34) in tRNA + (2E)-geranyl diphosphate = 5-methylaminomethyl-S-(2E)-geranyl-thiouridine(34) in tRNA + diphosphate. The catalysed reaction is 5-methylaminomethyl-S-(2E)-geranyl-thiouridine(34) in tRNA + selenophosphate + H(+) = 5-methylaminomethyl-2-(Se-phospho)selenouridine(34) in tRNA + (2E)-thiogeraniol. It carries out the reaction 5-methylaminomethyl-2-(Se-phospho)selenouridine(34) in tRNA + H2O = 5-methylaminomethyl-2-selenouridine(34) in tRNA + phosphate. In terms of biological role, involved in the post-transcriptional modification of the uridine at the wobble position (U34) of tRNA(Lys), tRNA(Glu) and tRNA(Gln). Catalyzes the conversion of 2-thiouridine (S2U-RNA) to 2-selenouridine (Se2U-RNA). Acts in a two-step process involving geranylation of 2-thiouridine (S2U) to S-geranyl-2-thiouridine (geS2U) and subsequent selenation of the latter derivative to 2-selenouridine (Se2U) in the tRNA chain. This chain is tRNA 2-selenouridine synthase, found in Shewanella halifaxensis (strain HAW-EB4).